Reading from the N-terminus, the 136-residue chain is Large ribosomal subunit protein uL16 (136 aa).

It belongs to the universal ribosomal protein uL16 family. As to quaternary structure, part of the 50S ribosomal subunit.

In terms of biological role, binds 23S rRNA and is also seen to make contacts with the A and possibly P site tRNAs. The sequence is that of Large ribosomal subunit protein uL16 from Enterobacter sp. (strain 638).